Reading from the N-terminus, the 591-residue chain is ADP-ribosylating toxin CARDS (591 aa).

The interval 1–205 (MPNPVRFVYR…LPTPGIATPV (205 aa)) is mono-ADP ribosyltransferase (mART) domain. The tract at residues 206–256 (HLSIPQAASVADVSEGTSASLSFACPDWSPPSSNGENPLDKCIAEKIDNYN) is NAD(+)-binding pocket. A disulfide bond links Cys-230 and Cys-247. The KELED motif, involved in host ER trafficking, solvent exposed in the crystal structure signature appears at 268-272 (KELED). Residues 273 to 439 (TPVYLRGIKT…QFVTMRAAST (167 aa)) are D2 domain. The interval 440–591 (FFVDVQLGWY…ILVKDGFDRF (152 aa)) is D3 domain.

The protein belongs to the bacterial exotoxin subunit A family. In terms of assembly, monomer. Binds to host (human) pulmonary surfactant-associated protein A1 (SFTPA1), the major mammalian protein component of pulmonary surfactant. Binds to host (human) surface annexin A2 (ANXA2) on the cell surface; anti-ANXA2 antibodies decrease binding to cells. Interacts with cytosolic host (human) NLRP3, which it ADP-ribosylates in vitro. In terms of processing, 8 hours after treatment of HeLa cells with purified protein, a substantial amount is processed to 2 nearly equal-sized fragments. The disulfide bond between Cys-230 and Cys-247 is required to for the toxin to exert its mART and vacuolating activities within target cells, and for protein processing. Acidic pH in the endosome and retrograde transport are required for toxin cleavage, which is required for both toxin activities. Trypsin treatment under mild conditions leads to cleavage at Lys-305 and Lys-307; the 2 proteins fragments remain associated and can be internalized and vacuolate HeLa cells.

The protein localises to the cell membrane. The protein resides in the cytoplasm. It localises to the cell surface. It is found in the cell projection. Its subcellular location is the attachment organelle. The protein localises to the host cytoplasm. The protein resides in the host cytosol. It localises to the host endoplasmic reticulum. With respect to regulation, in vitro ADP-ribosylation is enhanced by dithiotheritol. Its function is as follows. The main virulence factor for this bacteria, a mono-ADP-ribosylating toxin (mART), that transfers the ADP-ribosyl group from NAD(+) to multiple target proteins in vitro. Also elicits cytopathic effects in mammalian cells, such as disorganization and disruption of respiratory epithelial integrity in tracheal epithelium and vacuolization in the cytoplasm of CHO and HeLa cells as well as in mice and baboons. Treatment of mice or baboons with CARDS elicits a response that is consistent with human M.pneumoniae infections and mouse models of both infection and intoxication, suggesting that CARDS toxin is sufficient to cause prolonged inflammatory responses and airway dysfunction. Treatment of baboons with CARDS induces a number of cytokines; G-CSF (40 fold), IL-1Ra (10 fold), IL-6 and IL-8 (333 and 100 fold, respectively), MIP-1a (5 fold), and RANTES (9 fold). Treatment of mice gives a similar response. Binds phosphatidyl choline, dipalmitoylphosphatidylcholine (DPPC) and sphingomyelin via domains D2 plus D3. Functionally, has at least 2 host receptors SFTPA1 and ANXA2. Internalized by a clathrin-mediated process; protein is rapidly taken up at 37 degrees Celsius. Clathrin-independent or caveolin-dependent endocytosis were not detected. In HeLa cells internalized CARDS trafficks toward the nucleus by retrograde transport from early to late endosomes, then the Golgi apparatus; at 16 hours most toxin is concentrated in the perinuclear region in the host endoplasmic reticulum (ER). Failure to localize to the host ER prevents ADP-ribosylation and vacuolization. An acidic compartment is required to mediate retrotransport and processing of toxin into an N-terminal fragment with mART activity and a C-terminal fragment that is able to induce vacuolization. Induces the host NLRP3 inflammasome to release interleukin-1 beta (IL-1 beta); IL-1 beta release requires ADP-ribosylation activity and uptake by host macrophages. In the host colocalizes with the NLRP3 inflammasome; ADP-ribosylates NLRP3 in vitro. ADP-ribosylation of NLRP3 may lead to hyperinflammation. The polypeptide is ADP-ribosylating toxin CARDS (Mycoplasma pneumoniae (strain ATCC 29342 / M129 / Subtype 1) (Mycoplasmoides pneumoniae)).